The chain runs to 165 residues: Hemolysin, heat labile (165 aa).

A disulfide bond links Cys-151 and Cys-161.

This sequence belongs to the TDH hemolysin family. Homodimer.

In terms of biological role, bacterial hemolysins are exotoxins that attack blood cell membranes and cause cell rupture by mechanisms not clearly defined. The protein is Hemolysin, heat labile of Grimontia hollisae (Vibrio hollisae).